The following is a 533-amino-acid chain: 2-succinyl-5-enolpyruvyl-6-hydroxy-3-cyclohexene-1-carboxylate synthase (533 aa).

This sequence belongs to the TPP enzyme family. MenD subfamily. In terms of assembly, homodimer. Mg(2+) serves as cofactor. Requires Mn(2+) as cofactor. It depends on thiamine diphosphate as a cofactor.

It catalyses the reaction isochorismate + 2-oxoglutarate + H(+) = 5-enolpyruvoyl-6-hydroxy-2-succinyl-cyclohex-3-ene-1-carboxylate + CO2. It participates in quinol/quinone metabolism; 1,4-dihydroxy-2-naphthoate biosynthesis; 1,4-dihydroxy-2-naphthoate from chorismate: step 2/7. Its pathway is quinol/quinone metabolism; menaquinone biosynthesis. Functionally, catalyzes the thiamine diphosphate-dependent decarboxylation of 2-oxoglutarate and the subsequent addition of the resulting succinic semialdehyde-thiamine pyrophosphate anion to isochorismate to yield 2-succinyl-5-enolpyruvyl-6-hydroxy-3-cyclohexene-1-carboxylate (SEPHCHC). The protein is 2-succinyl-5-enolpyruvyl-6-hydroxy-3-cyclohexene-1-carboxylate synthase of Akkermansia muciniphila (strain ATCC BAA-835 / DSM 22959 / JCM 33894 / BCRC 81048 / CCUG 64013 / CIP 107961 / Muc).